The sequence spans 67 residues: uncharacterized protein (67 aa).

The next 2 helical transmembrane spans lie at 8 to 28 (MWFALGSMGLMFLAVASIYLS) and 41 to 61 (ISSFAYMCMLISGIIVFVVVF).

The protein localises to the cell membrane. This is an uncharacterized protein from Bacillus subtilis (strain 168).